We begin with the raw amino-acid sequence, 293 residues long: MEAMTLFDSPPILITGMSGGGLTSAAKVLEDKGYYVAHNIPPKAIVDLLKLCASPESPVSKIAAVTDVRSRLFPGSLAETLDELEQLDMKPTLLFLDARDDVLIRRFDSVRRTHPLQDGETLKAGIQRERAAVQSIRERADIIIDTTNLSVHDLRRAIEASFGEMGHELQHVTLESFGFKHGSPRDADLVVDVRFLPNPYWVPELRGYRGTDEPVADYVLSQDAAEPFIDHFITMFDSMLAGYRHEGKNFITVGIGCTGGHHRSVAVTEEIARRLRERGDLDVSTLHRDIARD.

16 to 23 is a binding site for ATP; the sequence is GMSGGGLT. Residue 67-70 coordinates GTP; that stretch reads DVRS.

This sequence belongs to the RapZ-like family.

In terms of biological role, displays ATPase and GTPase activities. The protein is Nucleotide-binding protein cauri_1197 of Corynebacterium aurimucosum (strain ATCC 700975 / DSM 44827 / CIP 107346 / CN-1) (Corynebacterium nigricans).